A 1318-amino-acid polypeptide reads, in one-letter code: 1-phosphatidylinositol 4,5-bisphosphate phosphodiesterase classes I and II (1318 aa).

One can recognise a PI-PLC X-box domain in the interval 318–466 (DDMDQPMSHY…LRRKIIIKNK (149 aa)). Residues His333 and His378 contribute to the active site. Substrate-binding residues include Lys464 and Lys466. The span at 466-481 (KKKHHHHHHHHHHKKP) shows a compositional bias: basic residues. 2 disordered regions span residues 466–489 (KKKHHHHHHHHHHKKPAQVGTPAA) and 505–594 (QQVG…KETE). Composition is skewed to low complexity over residues 528-543 (ATGTGTGSAAGTAGHA) and 554-563 (KDSTGSSDSD). Positions 571–580 (LPNTTPNLPS) are enriched in polar residues. Positions 585 to 594 (PPEKAQKETE) are enriched in basic and acidic residues. Positions 599-715 (ISALVNYVQP…GYLLKPEFMR (117 aa)) constitute a PI-PLC Y-box domain. Residues Ser628 and Arg655 each coordinate substrate. Positions 715 to 843 (RRSDRRLDPF…NLRSEVGQPI (129 aa)) constitute a C2 domain. Disordered regions lie at residues 1080-1112 (LDLGDSSEESAAADAGEDLAGGSSSLDGRTQES) and 1296-1318 (GSHSAISPAKSHNSIAAAAEMKT). Over residues 1088-1107 (ESAAADAGEDLAGGSSSLDG) the composition is skewed to low complexity.

In terms of tissue distribution, expressed in neuronal cell bodies of the optic lobe, central brain, and thoracic ganglia in adults, and the brain of larvae.

The catalysed reaction is a 1,2-diacyl-sn-glycero-3-phospho-(1D-myo-inositol-4,5-bisphosphate) + H2O = 1D-myo-inositol 1,4,5-trisphosphate + a 1,2-diacyl-sn-glycerol + H(+). In terms of biological role, the production of the second messenger molecules diacylglycerol (DAG) and inositol 1,4,5-trisphosphate (IP3) is mediated by activated phosphatidylinositol-specific phospholipase C enzymes. This chain is 1-phosphatidylinositol 4,5-bisphosphate phosphodiesterase classes I and II (Plc21C), found in Drosophila melanogaster (Fruit fly).